A 269-amino-acid polypeptide reads, in one-letter code: Protein TIFY 11B (269 aa).

The Tify domain occupies 100 to 135 (PESGNSQLTIFFGGKVMVFNEFPEDKAKEIMEVAKE). The segment at 160 to 181 (PDLNEPTSSGNNEDQETGQQHQ) is disordered. Positions 164–181 (EPTSSGNNEDQETGQQHQ) are enriched in polar residues. The Jas motif lies at 186-210 (IARRASLHRFFAKRKDRAVARAPYQ). Residues 187–194 (ARRASLHR) carry the Nuclear localization signal motif. Residues 209–269 (YQVNQHGSHL…QSSKNLELKL (61 aa)) are disordered. Over residues 250-269 (MPMEVDKKEGQSSKNLELKL) the composition is skewed to basic and acidic residues.

The protein belongs to the TIFY/JAZ family. As to quaternary structure, homo- and heterodimer. Interacts with MYC2, AFPH2/NINJA, TIFY10A/JAZ1, TIFY10B/JAZ2, TIFY11A/JAZ5, TIFY5A/JAZ8, TIFY9/JAZ10 and TIFY3B/JAZ12. In terms of assembly, (Microbial infection) Interacts with the pathogenic Pseudomonas syringae HopZ1a protein. Post-translationally, (Microbial infection) Acetylated by Pseudomonas syringae HopZ1a. Ubiquitinated. Targeted for degradation by the SCF(COI1) E3 ubiquitin ligase-proteasome pathway during jasmonate signaling.

The protein resides in the nucleus. Its subcellular location is the cell membrane. Repressor of jasmonate responses. The protein is Protein TIFY 11B of Arabidopsis thaliana (Mouse-ear cress).